A 221-amino-acid chain; its full sequence is LHFPL tetraspan subfamily member 5 protein (221 aa).

Residues 1-24 are Cytoplasmic-facing; sequence MPKLLPAQEAARIYHTNYVRNARA. The helical transmembrane segment at 25–45 threads the bilayer; that stretch reads MGVLWALFTLCFSILMVVTFI. The Extracellular segment spans residues 46–98; sequence QPYWIGDSIDTPQAGYFGLFSYCIGNALTGELICKGSPLDFGTIPSSAFKTAM. The chain crosses the membrane as a helical span at residues 99–119; the sequence is FFVGISTFLIIGSILCFSLFF. Topologically, residues 120–128 are cytoplasmic; it reads FCNAATVYK. The chain crosses the membrane as a helical span at residues 129-149; it reads VCAWMQLAAATGLMIGCLIYP. The Extracellular portion of the chain corresponds to 150–179; sequence DGWDSSEVKRMCGDKTDKYTLGACTVRWAY. The helical transmembrane segment at 180–200 threads the bilayer; the sequence is ILCIIGILDALILSFLAFVLG. Residues 201–221 are Cytoplasmic-facing; it reads NRQDNLLPSDFKVESKEEGNE.

Belongs to the LHFP family.

It localises to the cell membrane. In terms of biological role, probable component of the mechanotransducer (MET) non-specific cation channel complex. In Gallus gallus (Chicken), this protein is LHFPL tetraspan subfamily member 5 protein.